We begin with the raw amino-acid sequence, 434 residues long: UPF0597 protein CLD_2616 (434 aa).

It belongs to the UPF0597 family.

This chain is UPF0597 protein CLD_2616, found in Clostridium botulinum (strain Okra / Type B1).